A 375-amino-acid polypeptide reads, in one-letter code: MIALLILSLACSVSAYRLQGFINAGILAYKNIQNGDEDDNDNIVFSPFGYSFSMFMSLLSASGNTRVELLNTMNLRKRDLGPAFTELISGLAKMKTSKYTYTDLTYQSFVDSTVCIKPSYYQQYHRFGLYRLNFRRDAVNKINSIVERRSGMSNVVDSTMLDDNTLWAIINTIYFKGTWQYPFDITKTHNASFTNKYGTKTVPMMNVVTKLQGNTITIDDEEYDMVRLLYKDANISMYLAIGDNMTHFTDSITPAKLEYWSSQLGNKMYNLKLPRFSIENKRDIKSIAEMMAPSMFNPDKASFKHMTRDPLYIYKMFQNVKIDVDEQGTVAEASTIMVATARSSPEELEFNTPFVFIIRHDITGFILFMGKVEYT.

A signal peptide spans 1–15 (MIALLILSLACSVSA).

Belongs to the serpin family. Orthopoxvirus OPG040 subfamily. Interacts with OPG185/A56 protein.

It localises to the virion membrane. The protein localises to the host cell membrane. Negatively regulates superinfection and syncytium formation in infected host cells. Acts in concert with OPG185/A56 protein at the host cell membrane by interacting with and inhibiting the mature virion entry/fusion complex (EFC). This mechanism ensures that new virions released from the cell cannot enter already infected cells. The sequence is that of Superinfection exclusion protein (OPG040) from Cynomys gunnisoni (Gunnison's prairie dog).